The primary structure comprises 515 residues: Protein DETOXIFICATION 32 (515 aa).

The segment covering 1-26 (METLNVDHEDTISSEQEHRAHTKSDT) has biased composition (basic and acidic residues). Positions 1-30 (METLNVDHEDTISSEQEHRAHTKSDTDMPP) are disordered. The next 12 membrane-spanning stretches (helical) occupy residues 48-68 (LWWL…LGAV), 90-110 (VISG…ATLC), 131-151 (IILN…TPLL), 167-187 (FSLW…TAKF), 194-214 (VIAM…LSWL), 225-245 (GGAV…IVYI), 276-296 (AVMV…AGYL), 303-323 (VAAL…AFGF), 347-367 (LIVA…TLIV), 392-412 (LLAL…VAVG), 418-438 (IVAY…GLVL), and 448-468 (GIWT…LFII). Residues 488 to 497 (GDQSNKREEI) are compositionally biased toward basic and acidic residues. Residues 488 to 515 (GDQSNKREEIDLCEEDENNSNGENNHRK) are disordered. Positions 506 to 515 (NSNGENNHRK) are enriched in low complexity.

This sequence belongs to the multi antimicrobial extrusion (MATE) (TC 2.A.66.1) family.

The protein resides in the membrane. The chain is Protein DETOXIFICATION 32 from Arabidopsis thaliana (Mouse-ear cress).